A 695-amino-acid chain; its full sequence is DNA ligase (695 aa).

Residue 30–34 coordinates NAD(+); that stretch reads DADFD. The tract at residues 52 to 71 is disordered; it reads TGASPTEEVAPAPPTSSPFR. Residues 81–82 and E106 contribute to the NAD(+) site; that span reads SL. The N6-AMP-lysine intermediate role is filled by K108. 4 residues coordinate NAD(+): R129, E169, K285, and K309. 4 residues coordinate Zn(2+): C403, C406, C422, and C428. The BRCT domain occupies 599-688; that stretch reads VDSALLEGLT…APSSGDDAST (90 aa). Positions 676 to 695 are disordered; sequence ENGAPSSGDDASTSADSVDD. Over residues 679 to 695 the composition is skewed to low complexity; that stretch reads APSSGDDASTSADSVDD.

It belongs to the NAD-dependent DNA ligase family. LigA subfamily. Mg(2+) is required as a cofactor. The cofactor is Mn(2+).

The enzyme catalyses NAD(+) + (deoxyribonucleotide)n-3'-hydroxyl + 5'-phospho-(deoxyribonucleotide)m = (deoxyribonucleotide)n+m + AMP + beta-nicotinamide D-nucleotide.. DNA ligase that catalyzes the formation of phosphodiester linkages between 5'-phosphoryl and 3'-hydroxyl groups in double-stranded DNA using NAD as a coenzyme and as the energy source for the reaction. It is essential for DNA replication and repair of damaged DNA. In Corynebacterium jeikeium (strain K411), this protein is DNA ligase.